Consider the following 347-residue polypeptide: Phosphoribosylformylglycinamidine cyclo-ligase (347 aa).

This sequence belongs to the AIR synthase family.

The protein resides in the cytoplasm. It carries out the reaction 2-formamido-N(1)-(5-O-phospho-beta-D-ribosyl)acetamidine + ATP = 5-amino-1-(5-phospho-beta-D-ribosyl)imidazole + ADP + phosphate + H(+). It functions in the pathway purine metabolism; IMP biosynthesis via de novo pathway; 5-amino-1-(5-phospho-D-ribosyl)imidazole from N(2)-formyl-N(1)-(5-phospho-D-ribosyl)glycinamide: step 2/2. This is Phosphoribosylformylglycinamidine cyclo-ligase from Prochlorococcus marinus (strain MIT 9215).